Reading from the N-terminus, the 308-residue chain is Methionine synthase (308 aa).

Residues His-201, Cys-203, Glu-224, and Cys-285 each contribute to the Zn(2+) site.

This sequence belongs to the archaeal MetE family. Zn(2+) serves as cofactor.

It functions in the pathway amino-acid biosynthesis; L-methionine biosynthesis via de novo pathway. Its function is as follows. Catalyzes the transfer of a methyl group to L-homocysteine resulting in methionine formation. Can use methylcobalamin and methylcobinamide as methyl donors, but methylcobalamin is not considered to be the physiological substrate. The chain is Methionine synthase from Methanothermobacter thermautotrophicus (strain ATCC 29096 / DSM 1053 / JCM 10044 / NBRC 100330 / Delta H) (Methanobacterium thermoautotrophicum).